The sequence spans 462 residues: Anthranilate synthase component 1 (462 aa).

L-tryptophan-binding positions include Ser-37 and 244–246 (PYM). 279–280 (GT) lines the chorismate pocket. Residue Glu-306 participates in Mg(2+) binding. Chorismate is bound by residues Tyr-394, Arg-414, 428–430 (GAG), and Gly-430. Position 443 (Glu-443) interacts with Mg(2+).

The protein belongs to the anthranilate synthase component I family. As to quaternary structure, heterotetramer consisting of two non-identical subunits: a beta subunit (TrpG) and a large alpha subunit (TrpE). Mg(2+) is required as a cofactor.

The enzyme catalyses chorismate + L-glutamine = anthranilate + pyruvate + L-glutamate + H(+). Its pathway is amino-acid biosynthesis; L-tryptophan biosynthesis; L-tryptophan from chorismate: step 1/5. Feedback inhibited by tryptophan. Part of a heterotetrameric complex that catalyzes the two-step biosynthesis of anthranilate, an intermediate in the biosynthesis of L-tryptophan. In the first step, the glutamine-binding beta subunit (TrpG) of anthranilate synthase (AS) provides the glutamine amidotransferase activity which generates ammonia as a substrate that, along with chorismate, is used in the second step, catalyzed by the large alpha subunit of AS (TrpE) to produce anthranilate. In the absence of TrpG, TrpE can synthesize anthranilate directly from chorismate and high concentrations of ammonia. The chain is Anthranilate synthase component 1 (trpE) from Thermus thermophilus (strain ATCC 27634 / DSM 579 / HB8).